Consider the following 147-residue polypeptide: Cyanate hydratase (147 aa).

Residues arginine 88, glutamate 91, and serine 114 contribute to the active site.

The protein belongs to the cyanase family.

It catalyses the reaction cyanate + hydrogencarbonate + 3 H(+) = NH4(+) + 2 CO2. Functionally, catalyzes the reaction of cyanate with bicarbonate to produce ammonia and carbon dioxide. This Dechloromonas aromatica (strain RCB) protein is Cyanate hydratase.